The chain runs to 449 residues: Protein king tubby (449 aa).

A disordered region spans residues 123–197; it reads SAVHSANSTQ…GTGGESEGDV (75 aa). Polar residues predominate over residues 124–145; it reads AVHSANSTQSQRPRPRQHSFSD. A Phosphoserine modification is found at serine 142. Low complexity predominate over residues 154–166; the sequence is NRNVAAAAPVRPA. Gly residues predominate over residues 183-192; sequence NGTGNGTGGE.

It belongs to the TUB family.

The protein resides in the cytoplasm. It localises to the nucleus. Its subcellular location is the cell projection. It is found in the cilium membrane. The protein localises to the rhabdomere. This chain is Protein king tubby, found in Drosophila ananassae (Fruit fly).